An 847-amino-acid polypeptide reads, in one-letter code: Protein SEY1 (847 aa).

Over 1–720 the chain is Cytoplasmic; the sequence is MSSGEPLSET…KRSIVQHVTQ (720 aa). A GB1/RHD3-type G domain is found at 55–290; the sequence is GHNYHIVAVF…VENDIFKPEY (236 aa). 65–72 serves as a coordination point for GTP; that stretch reads GSQSTGKS. The helical transmembrane segment at 721–741 threads the bilayer; that stretch reads IPYYIYIIILLLGWNEFMAVV. At 742–744 the chain is on the lumenal side; that stretch reads RNP. The helical transmembrane segment at 745 to 765 threads the bilayer; that stretch reads FTFSLAIILGASLYILYTMNL. Topologically, residues 766 to 847 are cytoplasmic; sequence LKPALTVTQR…VTSLNVVEEE (82 aa).

The protein belongs to the TRAFAC class dynamin-like GTPase superfamily. GB1/RHD3 GTPase family. RHD3 subfamily.

The protein resides in the endoplasmic reticulum membrane. In terms of biological role, cooperates with the reticulon proteins and tubule-shaping DP1 family proteins to generate and maintain the structure of the tubular endoplasmic reticulum network. Has GTPase activity, which is required for its function in ER organization. The chain is Protein SEY1 from Lodderomyces elongisporus (strain ATCC 11503 / CBS 2605 / JCM 1781 / NBRC 1676 / NRRL YB-4239) (Yeast).